Reading from the N-terminus, the 200-residue chain is Ribosome maturation factor RimP (200 aa).

This sequence belongs to the RimP family.

The protein localises to the cytoplasm. Its function is as follows. Required for maturation of 30S ribosomal subunits. The polypeptide is Ribosome maturation factor RimP (Polaromonas sp. (strain JS666 / ATCC BAA-500)).